A 435-amino-acid polypeptide reads, in one-letter code: GTPase Der (435 aa).

EngA-type G domains are found at residues 8–169 and 176–351; these read NLVA…NFEN and FKIA…NNLS. GTP contacts are provided by residues 14–21, 61–65, 123–126, 182–189, 229–233, and 294–297; these read GKPNVGKS, DTGGI, NKLD, GKPNAGKS, DTAGI, and NKWD. Residues 352–435 enclose the KH-like domain; the sequence is REIKQNLLND…PINLVLKKNK (84 aa).

Belongs to the TRAFAC class TrmE-Era-EngA-EngB-Septin-like GTPase superfamily. EngA (Der) GTPase family. Associates with the 50S ribosomal subunit.

Its function is as follows. GTPase that plays an essential role in the late steps of ribosome biogenesis. This Mycoplasmopsis pulmonis (strain UAB CTIP) (Mycoplasma pulmonis) protein is GTPase Der.